The primary structure comprises 183 residues: Ribosome-recycling factor (183 aa).

It belongs to the RRF family.

It localises to the cytoplasm. Functionally, responsible for the release of ribosomes from messenger RNA at the termination of protein biosynthesis. May increase the efficiency of translation by recycling ribosomes from one round of translation to another. The sequence is that of Ribosome-recycling factor from Christiangramia forsetii (strain DSM 17595 / CGMCC 1.15422 / KT0803) (Gramella forsetii).